A 347-amino-acid chain; its full sequence is MVGGGWKRRPGAGAGPQCEKTVDVKKSKFCEADVSSDLRKEVENHYTLSLPEDFYHFWKFCEELDSEKPADPLSASLGLQLVDPYNILAGKHKMKKKSTVPNFNLHWRFYYDPPEFQTIIIRDKLSATWGISDRDSPDELPVYVGINEAKKNCIIVPNGDNVFAAVKLYLMKKLKEVTDKKKTNLFKNVDEKLTETARELGYSLEQRTMKMKQRDKKVVTKTFHGTGLVPPVDKNVVGYRELPETDADLKRICKTIVEAASDDERRKAFAPIQEMMTFVQFANDECDYGMGLELGMDLFCYGSHYFHKVAGQLLPLAYNLLKRNLFAEIMKDHLANRRKENIDQFAA.

Met-1 carries the N-acetylmethionine modification. Lys-187 and Lys-234 each carry N6-acetyllysine.

It belongs to the HPF1 family.

This Homo sapiens (Human) protein is Putative histone PARylation factor 1-like.